Consider the following 156-residue polypeptide: SsrA-binding protein (156 aa).

Residues 135–150 (KRDTIKDREWQRDRSR) show a composition bias toward basic and acidic residues. Positions 135–156 (KRDTIKDREWQRDRSRIMKKNT) are disordered.

The protein belongs to the SmpB family.

It is found in the cytoplasm. Functionally, required for rescue of stalled ribosomes mediated by trans-translation. Binds to transfer-messenger RNA (tmRNA), required for stable association of tmRNA with ribosomes. tmRNA and SmpB together mimic tRNA shape, replacing the anticodon stem-loop with SmpB. tmRNA is encoded by the ssrA gene; the 2 termini fold to resemble tRNA(Ala) and it encodes a 'tag peptide', a short internal open reading frame. During trans-translation Ala-aminoacylated tmRNA acts like a tRNA, entering the A-site of stalled ribosomes, displacing the stalled mRNA. The ribosome then switches to translate the ORF on the tmRNA; the nascent peptide is terminated with the 'tag peptide' encoded by the tmRNA and targeted for degradation. The ribosome is freed to recommence translation, which seems to be the essential function of trans-translation. This chain is SsrA-binding protein, found in Legionella pneumophila (strain Paris).